The chain runs to 841 residues: SLIT and NTRK-like protein 6 (841 aa).

The N-terminal stretch at 1-26 (MKLWIHLFYSSLLACISLHSQTPVLS) is a signal peptide. The LRRNT 1 domain occupies 27-67 (SRGSCDSLCNCEEKDGTMLINCEAKGIKMVSEISVPPSRPF). Topologically, residues 27 to 608 (SRGSCDSLCN…RSLTDAVPLS (582 aa)) are extracellular. LRR repeat units follow at residues 89 to 110 (NAIS…AFNG), 113 to 134 (LLKQ…TFHG), 137 to 158 (NLEF…AFSK), 161 to 182 (RLKV…IFRF), and 184 to 205 (PLTH…GFLE). In terms of domain architecture, LRRCT 1 spans 218-269 (NKWACNCDLLQLKTWLENMPPQSIIGDVVCNSPPFFKGSILSRLKKESICPT). Positions 320–361 (PSTQLPGPYCPIPCNCKVLSPSGLLIHCQERNIESLSDLRPP) constitute an LRRNT 2 domain. LRR repeat units follow at residues 364 to 385 (NPRK…DLVE), 388 to 409 (TLEM…SFMN), 412 to 433 (RLQK…MFLG), 436 to 457 (NLEY…TFNP), 460 to 481 (KLKV…IFSG), and 483 to 504 (PLTK…NILD). The LRRCT 2 domain occupies 517–568 (NPWDCSCDLVGLQQWIQKLSKNTVTDDILCTSPGHLDKKELKALNSEILCPG). The chain crosses the membrane as a helical span at residues 609-629 (VLILGLLIMFITIVFCAAGIV). Over 630–841 (VLVLHRRRRY…DYLEVLEQQT (212 aa)) the chain is Cytoplasmic.

The protein belongs to the SLITRK family. In adult brain, highly expressed in putamen with no expression in cerebral cortex. Expressed in adult and fetal lung and fetal liver. Also expressed at high levels in some brain tumors including medulloblastomas and primitive neuroectodermal tumors.

It localises to the cell membrane. Regulator of neurite outgrowth required for normal hearing and vision. The sequence is that of SLIT and NTRK-like protein 6 (SLITRK6) from Homo sapiens (Human).